Here is a 3797-residue protein sequence, read N- to C-terminus: A-kinase anchor protein 9 (3797 aa).

The disordered stretch occupies residues 1–140 (MEDEERQRKL…SSEQGAQSSQ (140 aa)). Polar residues-rich tracts occupy residues 50 to 65 (HTDQ…SSQR) and 92 to 108 (EIST…NGCN). The span at 115 to 124 (KPTDPLREEE) shows a compositional bias: basic and acidic residues. Serine 139 is subject to Phosphoserine. 2 coiled-coil regions span residues 140–607 (QTCL…LRTQ) and 640–976 (IHYK…LLAN). The residue at position 1288 (serine 1288) is a Phosphoserine. Disordered regions lie at residues 1643–1668 (STQT…LERS), 2323–2343 (VVST…EESF), and 2419–2454 (SDNL…ASRT). Composition is skewed to basic and acidic residues over residues 1648 to 1668 (DGHD…LERS) and 2328 to 2343 (QQRE…EESF). Residues 1808–2377 (SRLQAAVEKL…MTHMNNVLKE (570 aa)) adopt a coiled-coil conformation. A compositionally biased stretch (polar residues) spans 2438-2454 (KQTSLTRLQESPEASRT). Positions 2498 to 2510 (DLQRSLEKFAAAL) are PKA-RII subunit binding domain. 2 disordered regions span residues 2604-2695 (LEEA…SSSG) and 3271-3296 (MEKD…QKKM). Positions 2606 to 2615 (EAEERPEEGG) are enriched in acidic residues. Basic and acidic residues predominate over residues 2642-2669 (PLTEAKEKLSYSLEKEKRTGEQESREAP). Positions 2975 to 3325 (LQKADRRSLL…QVYKLDLEGK (351 aa)) form a coiled coil. A compositionally biased stretch (polar residues) spans 3279–3294 (QKTLQTEQEANTQGQK). Residues serine 3732, serine 3755, and serine 3787 each carry the phosphoserine modification.

In terms of assembly, interacts with the regulatory region of protein kinase N (PKN), protein phosphatase 2A (PP2A), protein phosphatase 1 (PP1) and the immature non-phosphorylated form of PKC epsilon. Interacts with CIP4 and FNBP1. Interacts with chloride intracellular channel proteins CLIC1, CLIC4 and CLIC5. CSNK1D binding promotes its centrosomal subcellular location. Interacts with GM130/GOLGA2; leading to recruitment to the Golgi apparatus. Interacts with KCNQ1; targets protein kinase A (PKA) catalytic and regulatory subunits and protein phosphatase 1 (PP1), to the heterodimer KCNQ1-KCNE1. Interacts with PDE4DIP isoform 2; this interaction stabilizes both proteins. In complex with PDE4DIP isoform 2, recruits CAMSAP2 to the Golgi apparatus. Forms a pericentrosomal complex with CDK5RAP2, EB1/MAPRE1 and PDE4DIP isoform 2; within this complex, MAPRE1 binding to CDK5RAP2 may be mediated by PDE4DIP. Interacts with MAPRE1 and MAPRE3. Interacts (via C-terminus) with CAMSAP2; this interaction is much stronger in the presence of PDE4DIP isoform 2. Interacts with CAMSAP3. Interacts (via C-terminus) with the gamma-tubulin ring complex (gamma-TuRC), composed of gamma-tubulin, TUBGCP2, TUBGCP3, TUBGCP4, TUBGCP5 and TUBGCP6.

It localises to the golgi apparatus. It is found in the cytoplasm. The protein localises to the cytoskeleton. The protein resides in the microtubule organizing center. Its subcellular location is the centrosome. Its function is as follows. Scaffolding protein that assembles several protein kinases and phosphatases on the centrosome and Golgi apparatus. Required to maintain the integrity of the Golgi apparatus. Required for microtubule nucleation at the cis-side of the Golgi apparatus. Required for association of the centrosomes with the poles of the bipolar mitotic spindle during metaphase. In complex with PDE4DIP isoform 2/MMG8/SMYLE, recruits CAMSAP2 to the Golgi apparatus and tethers non-centrosomal minus-end microtubules to the Golgi, an important step for polarized cell movement. In complex with PDE4DIP isoform 2, EB1/MAPRE1 and CDK5RAP2, contributes to microtubules nucleation and extension also from the centrosome to the cell periphery. In Mus musculus (Mouse), this protein is A-kinase anchor protein 9 (Akap9).